Here is a 199-residue protein sequence, read N- to C-terminus: UPF0301 protein Anae109_0457 (199 aa).

The protein belongs to the UPF0301 (AlgH) family.

The sequence is that of UPF0301 protein Anae109_0457 from Anaeromyxobacter sp. (strain Fw109-5).